Reading from the N-terminus, the 116-residue chain is Putative iron-sulfur cluster insertion protein ErpA (116 aa).

The iron-sulfur cluster site is built by cysteine 44, cysteine 108, and cysteine 110.

It belongs to the HesB/IscA family. Homodimer. Iron-sulfur cluster serves as cofactor.

Required for insertion of 4Fe-4S clusters. The sequence is that of Putative iron-sulfur cluster insertion protein ErpA from Azoarcus sp. (strain BH72).